We begin with the raw amino-acid sequence, 218 residues long: Cytidylate kinase (218 aa).

Position 11–19 (11–19 (GPGASGKGT)) interacts with ATP.

The protein belongs to the cytidylate kinase family. Type 1 subfamily.

It is found in the cytoplasm. The enzyme catalyses CMP + ATP = CDP + ADP. It carries out the reaction dCMP + ATP = dCDP + ADP. The sequence is that of Cytidylate kinase from Neisseria meningitidis serogroup A / serotype 4A (strain DSM 15465 / Z2491).